The sequence spans 467 residues: UDP-N-acetylmuramate--L-alanine ligase (467 aa).

Residue 114 to 120 (GTHGKTT) participates in ATP binding.

It belongs to the MurCDEF family.

The protein localises to the cytoplasm. It catalyses the reaction UDP-N-acetyl-alpha-D-muramate + L-alanine + ATP = UDP-N-acetyl-alpha-D-muramoyl-L-alanine + ADP + phosphate + H(+). Its pathway is cell wall biogenesis; peptidoglycan biosynthesis. Its function is as follows. Cell wall formation. This is UDP-N-acetylmuramate--L-alanine ligase from Rhodopseudomonas palustris (strain BisB5).